Reading from the N-terminus, the 472-residue chain is CAAX prenyl protease 1 homolog (472 aa).

The Lumenal segment spans residues Met1–Asp8. The chain crosses the membrane as a helical span at residues Leu9–Leu29. The Cytoplasmic segment spans residues Trp30 to Asp75. Residues Ile76–Ala96 traverse the membrane as a helical segment. At Trp97–Glu124 the chain is on the lumenal side. The chain crosses the membrane as a helical span at residues Ile125–Pro145. The Cytoplasmic segment spans residues Trp146–Ser175. The chain crosses the membrane as a helical span at residues Leu176–Ala196. Over Gly197–Gly207 the chain is Lumenal. A helical membrane pass occupies residues Phe208–Phe228. The Cytoplasmic portion of the chain corresponds to Asp229–Thr340. His329 serves as a coordination point for Zn(2+). Glu330 is a catalytic residue. A Zn(2+)-binding site is contributed by His333. Residues Phe341–Ile361 traverse the membrane as a helical segment. Over Asn362–Arg382 the chain is Lumenal. Residues Leu383–Thr403 form a helical membrane-spanning segment. The Cytoplasmic segment spans residues Met404–Lys472. Glu410 serves as a coordination point for Zn(2+). Asp414 functions as the Proton donor in the catalytic mechanism.

The protein belongs to the peptidase M48A family. Homodimer; disulfide-linked. Requires Zn(2+) as cofactor.

It is found in the endoplasmic reticulum membrane. The enzyme catalyses Hydrolyzes the peptide bond -P2-(S-farnesyl or geranylgeranyl)C-P1'-P2'-P3'-COOH where P1' and P2' are amino acids with aliphatic side chains and P3' is any C-terminal residue.. Inhibited by ethylenediaminetetraacetic acid (EDTA) but not by serine, aspartic or cysteine protease inhibitors. Inhibited by high concentration of Zn(2+) (&gt; 0.1 mM). Functionally, zinc-dependent metalloproteinase. Proteolytically removes the C-terminal three residues of farnesylated proteins. The sequence is that of CAAX prenyl protease 1 homolog from Taenia solium (Pork tapeworm).